The sequence spans 160 residues: Class II hydrophobin 8 (160 aa).

4 cysteine pairs are disulfide-bonded: Cys-92–Cys-141, Cys-102–Cys-132, Cys-103–Cys-115, and Cys-142–Cys-153.

It belongs to the cerato-ulmin hydrophobin family. As to quaternary structure, homodimer. Homodimers further self-assemble to form highly ordered films at water-air interfaces through intermolecular interactions.

The protein localises to the secreted. It is found in the cell wall. Its function is as follows. Aerial growth, conidiation, and dispersal of filamentous fungi in the environment rely upon a capability of their secreting small amphipathic proteins called hydrophobins (HPBs) with low sequence identity. Class I can self-assemble into an outermost layer of rodlet bundles on aerial cell surfaces, conferring cellular hydrophobicity that supports fungal growth, development and dispersal; whereas Class II form highly ordered films at water-air interfaces through intermolecular interactions but contribute nothing to the rodlet structure. This Trichoderma asperellum (strain ATCC 204424 / CBS 433.97 / NBRC 101777) protein is Class II hydrophobin 8.